The following is a 278-amino-acid chain: Ribosomal RNA small subunit methyltransferase A (278 aa).

Residues Asn27, Leu29, Gly54, Glu75, Asp101, and Asn120 each contribute to the S-adenosyl-L-methionine site.

It belongs to the class I-like SAM-binding methyltransferase superfamily. rRNA adenine N(6)-methyltransferase family. RsmA subfamily.

It localises to the cytoplasm. It carries out the reaction adenosine(1518)/adenosine(1519) in 16S rRNA + 4 S-adenosyl-L-methionine = N(6)-dimethyladenosine(1518)/N(6)-dimethyladenosine(1519) in 16S rRNA + 4 S-adenosyl-L-homocysteine + 4 H(+). Specifically dimethylates two adjacent adenosines (A1518 and A1519) in the loop of a conserved hairpin near the 3'-end of 16S rRNA in the 30S particle. May play a critical role in biogenesis of 30S subunits. The polypeptide is Ribosomal RNA small subunit methyltransferase A (Zymomonas mobilis subsp. mobilis (strain ATCC 31821 / ZM4 / CP4)).